Here is a 368-residue protein sequence, read N- to C-terminus: Zinc finger protein 24 (368 aa).

K22 is covalently cross-linked (Glycyl lysine isopeptide (Lys-Gly) (interchain with G-Cter in SUMO2)). K27 participates in a covalent cross-link: Glycyl lysine isopeptide (Lys-Gly) (interchain with G-Cter in SUMO1); alternate. K27 participates in a covalent cross-link: Glycyl lysine isopeptide (Lys-Gly) (interchain with G-Cter in SUMO2); alternate. In terms of domain architecture, SCAN box spans 52 to 134 (RQRFRQFGYQ…TVLEDLESEL (83 aa)). Phosphoserine occurs at positions 132 and 142. Residues K147, K177, and K236 each participate in a glycyl lysine isopeptide (Lys-Gly) (interchain with G-Cter in SUMO2) cross-link. The segment at 251–273 (HICDECGKHFSQGSALILHQRIH) adopts a C2H2-type 1 zinc-finger fold. Residues 251-301 (HICDECGKHFSQGSALILHQRIHSGEKPYGCVECGKAFSRSSILVQHQRVH) are necessary and sufficient for nuclear localization. S274 carries the post-translational modification Phosphoserine. Glycyl lysine isopeptide (Lys-Gly) (interchain with G-Cter in SUMO2) cross-links involve residues K277 and K286. 3 consecutive C2H2-type zinc fingers follow at residues 279–301 (YGCV…QRVH), 307–329 (YKCL…QRIH), and 335–357 (YECV…QRRH). At S292 the chain carries Phosphoserine. The residue at position 335 (Y335) is a Phosphotyrosine. Residues K361 and K367 each participate in a glycyl lysine isopeptide (Lys-Gly) (interchain with G-Cter in SUMO2) cross-link.

This sequence belongs to the krueppel C2H2-type zinc-finger protein family. Sumoylated.

The protein resides in the nucleus. Its function is as follows. Transcription factor required for myelination of differentiated oligodendrocytes. Required for the conversion of oligodendrocytes from the premyelinating to the myelinating state. In the developing central nervous system (CNS), involved in the maintenance in the progenitor stage by promoting the cell cycle. Specifically binds to the 5'-TCAT-3' DNA sequence. Has transcription repressor activity in vitro. This is Zinc finger protein 24 (ZNF24) from Pongo abelii (Sumatran orangutan).